Consider the following 159-residue polypeptide: Probable NADH dehydrogenase [ubiquinone] 1 alpha subcomplex subunit 12 (159 aa).

Belongs to the complex I NDUFA12 subunit family. Complex I is composed of at least 49 different subunits.

Its subcellular location is the mitochondrion inner membrane. Functionally, accessory subunit of the mitochondrial membrane respiratory chain NADH dehydrogenase (Complex I), that is believed not to be involved in catalysis. Complex I functions in the transfer of electrons from NADH to the respiratory chain. The immediate electron acceptor for the enzyme is believed to be ubiquinone. The polypeptide is Probable NADH dehydrogenase [ubiquinone] 1 alpha subcomplex subunit 12 (Arabidopsis thaliana (Mouse-ear cress)).